The chain runs to 432 residues: Glutamyl-tRNA reductase (432 aa).

Substrate is bound by residues T55–R58, S114, E119–Q121, and Q125. The active-site Nucleophile is C56. G194–I199 is a binding site for NADP(+).

This sequence belongs to the glutamyl-tRNA reductase family. As to quaternary structure, homodimer.

The enzyme catalyses (S)-4-amino-5-oxopentanoate + tRNA(Glu) + NADP(+) = L-glutamyl-tRNA(Glu) + NADPH + H(+). Its pathway is porphyrin-containing compound metabolism; protoporphyrin-IX biosynthesis; 5-aminolevulinate from L-glutamyl-tRNA(Glu): step 1/2. Functionally, catalyzes the NADPH-dependent reduction of glutamyl-tRNA(Glu) to glutamate 1-semialdehyde (GSA). The chain is Glutamyl-tRNA reductase from Burkholderia orbicola (strain MC0-3).